The sequence spans 292 residues: Mycothiol acetyltransferase (292 aa).

2 consecutive N-acetyltransferase domains span residues 13-168 and 159-292; these read ALDR…KWLQ and KSVA…VYEK. A 1D-myo-inositol 2-(L-cysteinylamino)-2-deoxy-alpha-D-glucopyranoside-binding site is contributed by Glu40. Position 77-79 (77-79) interacts with acetyl-CoA; it reads LAV. 1D-myo-inositol 2-(L-cysteinylamino)-2-deoxy-alpha-D-glucopyranoside contacts are provided by Glu179, Lys218, and Glu226. Residues 230-232 and 237-243 each bind acetyl-CoA; these read VGL and RGRGLGD. A 1D-myo-inositol 2-(L-cysteinylamino)-2-deoxy-alpha-D-glucopyranoside-binding site is contributed by Tyr264.

Belongs to the acetyltransferase family. MshD subfamily. In terms of assembly, monomer.

It carries out the reaction 1D-myo-inositol 2-(L-cysteinylamino)-2-deoxy-alpha-D-glucopyranoside + acetyl-CoA = mycothiol + CoA + H(+). In terms of biological role, catalyzes the transfer of acetyl from acetyl-CoA to desacetylmycothiol (Cys-GlcN-Ins) to form mycothiol. The protein is Mycothiol acetyltransferase of Corynebacterium glutamicum (strain R).